A 533-amino-acid polypeptide reads, in one-letter code: Quinate permease (533 aa).

Residues 1 to 21 (MSILALVEDRPTPREVYNWRV) are Cytoplasmic-facing. Residues 22 to 42 (YLLAAVASFTSCMIGYDSAFI) form a helical membrane-spanning segment. Topologically, residues 43–67 (GTTLSLQSFQNEFNWESLNTDLISA) are extracellular. The helical transmembrane segment at 68 to 88 (NIVSLYQAGAFFGALFAYPIG) threads the bilayer. Residues 89–94 (HFWGRR) are Cytoplasmic-facing. A helical transmembrane segment spans residues 95 to 115 (WGLMFSALIFFLGAGMMLGAN). Over 116 to 127 (GDRGLGLIYGGR) the chain is Extracellular. The helical transmembrane segment at 128-148 (VLAGIGVGAGSNICPIYISEM) threads the bilayer. Residues 149-156 (APPAIRGR) lie on the Cytoplasmic side of the membrane. Residues 157–177 (LVGVYELGWQIGGVVGFWINY) form a helical membrane-spanning segment. Residues 178-191 (GVDETLAPSHKQWI) lie on the Extracellular side of the membrane. A helical membrane pass occupies residues 192–212 (IPFAVQLIPAGLLIIGALLIR). Topologically, residues 213–282 (ESPRWLFLRG…AWTNKRILYR (70 aa)) are cytoplasmic. Residues 283-303 (LFLGSMLFLWQNGSGINAINY) form a helical membrane-spanning segment. The Extracellular segment spans residues 304 to 324 (YSPRVFKSIGVSGGNTSLLTT). A helical membrane pass occupies residues 325–346 (GIFGVVKAVITFVWLLYLIDHF). At 347-349 (GRR) the chain is on the cytoplasmic side. Residues 350-370 (NLLLVGAAGGSVCLWIVGGYI) traverse the membrane as a helical segment. The Extracellular portion of the chain corresponds to 371–385 (KIAKPENNPEGTQLD). The helical transmembrane segment at 386–406 (SGGIAAIFFFYLWTAFYTPSW) threads the bilayer. Topologically, residues 407 to 431 (NGTPWVINSEMFDPTVRSLAQACAA) are cytoplasmic. A helical membrane pass occupies residues 432–452 (ASNWLWNFLISRFTPQMFTSM). Residues 453–454 (GY) lie on the Extracellular side of the membrane. Residues 455 to 475 (GVYFFFASLMILSIVFVFFLI) traverse the membrane as a helical segment. The Cytoplasmic segment spans residues 476-533 (PETKGVPLESMETLFDKKPVWHAHSQLIRELRENEEAFRADMGASGKGGVTKEYVEEA).

Belongs to the major facilitator superfamily. Sugar transporter (TC 2.A.1.1) family. As to quaternary structure, interacts with creB. Ubiquitinated. Deubiquitinated by creB, probably to control its activity or amount.

It localises to the cell membrane. Its function is as follows. Integral membrane transporter that imports quinic acid to be catabolized as a carbon source. In Emericella nidulans (strain FGSC A4 / ATCC 38163 / CBS 112.46 / NRRL 194 / M139) (Aspergillus nidulans), this protein is Quinate permease (qutD).